The sequence spans 356 residues: Histidinol-phosphate aminotransferase (356 aa).

At lysine 214 the chain carries N6-(pyridoxal phosphate)lysine.

It belongs to the class-II pyridoxal-phosphate-dependent aminotransferase family. Histidinol-phosphate aminotransferase subfamily. In terms of assembly, homodimer. Requires pyridoxal 5'-phosphate as cofactor.

The enzyme catalyses L-histidinol phosphate + 2-oxoglutarate = 3-(imidazol-4-yl)-2-oxopropyl phosphate + L-glutamate. It functions in the pathway amino-acid biosynthesis; L-histidine biosynthesis; L-histidine from 5-phospho-alpha-D-ribose 1-diphosphate: step 7/9. This chain is Histidinol-phosphate aminotransferase, found in Escherichia coli O1:K1 / APEC.